We begin with the raw amino-acid sequence, 338 residues long: Glycerol-3-phosphate dehydrogenase [NAD(P)+] (338 aa).

S13, W14, and K108 together coordinate NADPH. K108, G139, and S141 together coordinate sn-glycerol 3-phosphate. A143 contacts NADPH. The sn-glycerol 3-phosphate site is built by K194, D247, S257, R258, and N259. The active-site Proton acceptor is K194. Position 258 (R258) interacts with NADPH. Residues V282 and E284 each contribute to the NADPH site.

The protein belongs to the NAD-dependent glycerol-3-phosphate dehydrogenase family.

The protein resides in the cytoplasm. It carries out the reaction sn-glycerol 3-phosphate + NAD(+) = dihydroxyacetone phosphate + NADH + H(+). The catalysed reaction is sn-glycerol 3-phosphate + NADP(+) = dihydroxyacetone phosphate + NADPH + H(+). It participates in membrane lipid metabolism; glycerophospholipid metabolism. Catalyzes the reduction of the glycolytic intermediate dihydroxyacetone phosphate (DHAP) to sn-glycerol 3-phosphate (G3P), the key precursor for phospholipid synthesis. The sequence is that of Glycerol-3-phosphate dehydrogenase [NAD(P)+] from Streptococcus pneumoniae (strain Hungary19A-6).